A 2462-amino-acid polypeptide reads, in one-letter code: Non-reducing polyketide synthase ausA (2462 aa).

Positions 16-253 are N-terminal acylcarrier protein transacylase domain (SAT); sequence VFFGPVYPEL…HTADHIPAMK (238 aa). The 417-residue stretch at 385–801 folds into the Ketosynthase family 3 (KS3) domain; that stretch reads SAPIAVTGFA…GSNAVIVVKE (417 aa). Residues cysteine 550, histidine 685, and histidine 724 each act as for beta-ketoacyl synthase activity in the active site. The segment at 904–1208 is malonyl-CoA:ACP transacylase (MAT) domain; it reads LCFGGQTGDT…LPIDLQESTA (305 aa). Residue serine 991 is the For acyl/malonyl transferase activity of the active site. The segment at 1274–1403 is N-terminal hotdog fold; that stretch reads HDDGLLQLVE…GKVLLDPQAA (130 aa). The PKS/mFAS DH domain maps to 1274–1581; the sequence is HDDGLLQLVE…FTSVSIQSLK (308 aa). A product template (PT) domain region spans residues 1277 to 1580; sequence GLLQLVERDA…TFTSVSIQSL (304 aa). Histidine 1307 (proton acceptor; for dehydratase activity) is an active-site residue. Residues 1431–1581 form a C-terminal hotdog fold region; that stretch reads SSNGLKRATV…FTSVSIQSLK (151 aa). The active-site Proton donor; for dehydratase activity is the aspartate 1489. Positions 1613–1690 constitute a Carrier domain; that stretch reads VSDDHHLRAV…GLAHRISPSS (78 aa). O-(pantetheine 4'-phosphoryl)serine is present on serine 1650. A methyltransferase (CMeT) domain region spans residues 1850–2083; it reads QHASEHKLLR…GFNWVDWTDN (234 aa). A thioesterase (TE) domain region spans residues 2112–2462; sequence TPARVETVRY…YEFLRQHVAV (351 aa). Active-site for thioesterase activity residues include serine 2235, aspartate 2398, and histidine 2430.

The catalysed reaction is 3 malonyl-CoA + acetyl-CoA + 2 S-adenosyl-L-methionine = 3,5-dimethylorsellinate + 2 S-adenosyl-L-homocysteine + 3 CO2 + 4 CoA. It participates in secondary metabolite biosynthesis; terpenoid biosynthesis. Its function is as follows. Non-reducing polyketide synthase; part of the gene cluster that mediates the biosynthesis of calidodehydroaustin, a fungal meroterpenoid. The first step of the pathway is the synthesis of 3,5-dimethylorsellinic acid by the polyketide synthase ausA. 3,5-dimethylorsellinic acid is then prenylated by the polyprenyl transferase ausN. Further epoxidation by the FAD-dependent monooxygenase ausM and cyclization by the probable terpene cyclase ausL lead to the formation of protoaustinoid A. Protoaustinoid A is then oxidized to spiro-lactone preaustinoid A3 by the combined action of the FAD-binding monooxygenases ausB and ausC, and the dioxygenase ausE. Acid-catalyzed keto-rearrangement and ring contraction of the tetraketide portion of preaustinoid A3 by ausJ lead to the formation of preaustinoid A4. The aldo-keto reductase ausK, with the help of ausH, is involved in the next step by transforming preaustinoid A4 into isoaustinone which is in turn hydroxylated by the P450 monooxygenase ausI to form austinolide. The cytochrome P450 monooxygenase ausG modifies austinolide to austinol. Austinol is further acetylated to austin by the O-acetyltransferase ausP, which spontaneously changes to dehydroaustin. The cytochrome P450 monooxygenase ausR then converts dehydroaustin is into 7-dehydrodehydroaustin. The hydroxylation catalyzed by ausR permits the O-acetyltransferase ausQ to add an additional acetyl group to the molecule, leading to the formation of acetoxydehydroaustin. The short chain dehydrogenase ausT catalyzes the reduction of the double bond present between carbon atoms 1 and 2 to convert 7-dehydrodehydroaustin into 1,2-dihydro-7-hydroxydehydroaustin. AusQ catalyzes not only an acetylation reaction but also the addition of the PKS ausV diketide product to 1,2-dihydro-7-hydroxydehydroaustin, forming precalidodehydroaustin. Finally, the iron/alpha-ketoglutarate-dependent dioxygenase converts precalidodehydroaustin into calidodehydroaustin. This is Non-reducing polyketide synthase ausA from Aspergillus calidoustus.